A 154-amino-acid chain; its full sequence is Endoribonuclease YbeY (154 aa).

Zn(2+)-binding residues include His-113, His-117, and His-123.

Belongs to the endoribonuclease YbeY family. Zn(2+) serves as cofactor.

It is found in the cytoplasm. Its function is as follows. Single strand-specific metallo-endoribonuclease involved in late-stage 70S ribosome quality control and in maturation of the 3' terminus of the 16S rRNA. This Vibrio vulnificus (strain CMCP6) protein is Endoribonuclease YbeY.